The following is a 343-amino-acid chain: Dihydroorotate dehydrogenase (quinone) (343 aa).

Residues 61–65 (AGLDK) and threonine 85 contribute to the FMN site. Substrate is bound at residue lysine 65. 110-114 (NRMGF) is a substrate binding site. FMN-binding residues include asparagine 138 and asparagine 171. Asparagine 171 is a substrate binding site. Serine 174 (nucleophile) is an active-site residue. Asparagine 176 contributes to the substrate binding site. 2 residues coordinate FMN: lysine 216 and threonine 244. Residue 245–246 (NT) coordinates substrate. FMN-binding positions include glycine 267, glycine 296, and 317–318 (YS).

Belongs to the dihydroorotate dehydrogenase family. Type 2 subfamily. As to quaternary structure, monomer. The cofactor is FMN.

The protein localises to the cell membrane. The enzyme catalyses (S)-dihydroorotate + a quinone = orotate + a quinol. Its pathway is pyrimidine metabolism; UMP biosynthesis via de novo pathway; orotate from (S)-dihydroorotate (quinone route): step 1/1. In terms of biological role, catalyzes the conversion of dihydroorotate to orotate with quinone as electron acceptor. The sequence is that of Dihydroorotate dehydrogenase (quinone) from Pseudomonas syringae pv. syringae (strain B728a).